The following is a 229-amino-acid chain: Cytochrome c oxidase subunit 2 (229 aa).

Residues 1–26 (MSTWANLGLQDSASPLMEQLIFFHDH) lie on the Mitochondrial intermembrane side of the membrane. Residues 27–48 (ALLILVMITVLVGYLMFMLFFN) form a helical membrane-spanning segment. Residues 49 to 62 (SYVNRFLLHGQLIE) are Mitochondrial matrix-facing. The chain crosses the membrane as a helical span at residues 63–82 (MIWTILPAIILLFIAMPSLR). Residues 83-229 (LLYLLDEINE…IKWISNSVNS (147 aa)) lie on the Mitochondrial intermembrane side of the membrane. 6 residues coordinate Cu cation: His161, Cys196, Glu198, Cys200, His204, and Met207. A Mg(2+)-binding site is contributed by Glu198.

Belongs to the cytochrome c oxidase subunit 2 family. Component of the cytochrome c oxidase (complex IV, CIV), a multisubunit enzyme composed of a catalytic core of 3 subunits and several supernumerary subunits. The complex exists as a monomer or a dimer and forms supercomplexes (SCs) in the inner mitochondrial membrane with ubiquinol-cytochrome c oxidoreductase (cytochrome b-c1 complex, complex III, CIII). The cofactor is Cu cation.

The protein localises to the mitochondrion inner membrane. The enzyme catalyses 4 Fe(II)-[cytochrome c] + O2 + 8 H(+)(in) = 4 Fe(III)-[cytochrome c] + 2 H2O + 4 H(+)(out). Component of the cytochrome c oxidase, the last enzyme in the mitochondrial electron transport chain which drives oxidative phosphorylation. The respiratory chain contains 3 multisubunit complexes succinate dehydrogenase (complex II, CII), ubiquinol-cytochrome c oxidoreductase (cytochrome b-c1 complex, complex III, CIII) and cytochrome c oxidase (complex IV, CIV), that cooperate to transfer electrons derived from NADH and succinate to molecular oxygen, creating an electrochemical gradient over the inner membrane that drives transmembrane transport and the ATP synthase. Cytochrome c oxidase is the component of the respiratory chain that catalyzes the reduction of oxygen to water. Electrons originating from reduced cytochrome c in the intermembrane space (IMS) are transferred via the dinuclear copper A center (CU(A)) of subunit 2 and heme A of subunit 1 to the active site in subunit 1, a binuclear center (BNC) formed by heme A3 and copper B (CU(B)). The BNC reduces molecular oxygen to 2 water molecules using 4 electrons from cytochrome c in the IMS and 4 protons from the mitochondrial matrix. The chain is Cytochrome c oxidase subunit 2 (mt:CoII) from Drosophila ambigua (Fruit fly).